The primary structure comprises 458 residues: Exodeoxyribonuclease 7 large subunit (458 aa).

The protein belongs to the XseA family. In terms of assembly, heterooligomer composed of large and small subunits.

The protein localises to the cytoplasm. The catalysed reaction is Exonucleolytic cleavage in either 5'- to 3'- or 3'- to 5'-direction to yield nucleoside 5'-phosphates.. Its function is as follows. Bidirectionally degrades single-stranded DNA into large acid-insoluble oligonucleotides, which are then degraded further into small acid-soluble oligonucleotides. The protein is Exodeoxyribonuclease 7 large subunit of Geobacter sp. (strain M21).